A 272-amino-acid polypeptide reads, in one-letter code: Putative pyruvate, phosphate dikinase regulatory protein (272 aa).

An ADP-binding site is contributed by 154–161; that stretch reads GVSRTSKS.

Belongs to the pyruvate, phosphate/water dikinase regulatory protein family. PDRP subfamily.

It catalyses the reaction N(tele)-phospho-L-histidyl/L-threonyl-[pyruvate, phosphate dikinase] + ADP = N(tele)-phospho-L-histidyl/O-phospho-L-threonyl-[pyruvate, phosphate dikinase] + AMP + H(+). The enzyme catalyses N(tele)-phospho-L-histidyl/O-phospho-L-threonyl-[pyruvate, phosphate dikinase] + phosphate + H(+) = N(tele)-phospho-L-histidyl/L-threonyl-[pyruvate, phosphate dikinase] + diphosphate. In terms of biological role, bifunctional serine/threonine kinase and phosphorylase involved in the regulation of the pyruvate, phosphate dikinase (PPDK) by catalyzing its phosphorylation/dephosphorylation. This Wolbachia pipientis subsp. Culex pipiens (strain wPip) protein is Putative pyruvate, phosphate dikinase regulatory protein.